Consider the following 957-residue polypeptide: SH3 domain-binding protein 4 (957 aa).

Positions 54 to 113 constitute an SH3 1 domain; it reads DNVKEVVAIKDYCPNNFTTLKFSKGEHLYVLDTSGGEWWYAHNTTEMGYIPSSYVQPLNY. The region spanning 312–449 is the ZU5 domain; the sequence is TSIVCRLDSS…LEPVMYVVMV (138 aa). An SH3 2 domain is found at 649-719; that stretch reads TSLKYGKLLK…HAKNVLVVGK (71 aa).

As to quaternary structure, homodimer or homooligomer.

It localises to the membrane. It is found in the clathrin-coated pit. The protein localises to the cytoplasmic vesicle. Its subcellular location is the clathrin-coated vesicle. The protein resides in the nucleus. Possible role in regulating endocytosis of the transferrin receptor at the plasma membrane. Alternatively, may function as a negative regulator of the amino acid-induced TOR signaling by inhibiting the formation of active Rag GTPase complexes. Preferentially binds inactive Rag GTPase complexes and prevents their interaction with the mTORC1 complex inhibiting its relocalization to lysosomes and its activation. Thereby, may indirectly regulate cell growth, proliferation and autophagy. The chain is SH3 domain-binding protein 4 (sh3bp4) from Xenopus tropicalis (Western clawed frog).